A 395-amino-acid chain; its full sequence is Phosphoglycerate kinase (395 aa).

Residues 20–22 (DFN), arginine 36, 59–62 (HLGR), arginine 120, and arginine 157 each bind substrate. ATP-binding positions include lysine 208, glycine 296, glutamate 327, and 353-356 (GGDT).

It belongs to the phosphoglycerate kinase family. In terms of assembly, monomer.

The protein resides in the cytoplasm. It carries out the reaction (2R)-3-phosphoglycerate + ATP = (2R)-3-phospho-glyceroyl phosphate + ADP. The protein operates within carbohydrate degradation; glycolysis; pyruvate from D-glyceraldehyde 3-phosphate: step 2/5. This Tropheryma whipplei (strain TW08/27) (Whipple's bacillus) protein is Phosphoglycerate kinase.